The following is a 530-amino-acid chain: Hyalin (530 aa).

7 consecutive HYR domains span residues 1–66 (NVEI…TVTA), 67–150 (TDSI…NVVE), 151–234 (VDTT…NVVE), 235–319 (VDTT…NVVE), 320–403 (VDTT…NIVE), 404–486 (EDTT…TVNT), and 487–530 (VDTT…ASLV).

Homooligomer in presence of calcium. Post-translationally, glycosylated.

It localises to the secreted. Its subcellular location is the extracellular space. The protein localises to the extracellular matrix. Its function is as follows. Major constituent of the hyaline layer. The hyaline layer of echinoderm embryos is an extraembryonic matrix that functions as a substrate for cell adhesion through early development. The protein is Hyalin of Lytechinus variegatus (Green sea urchin).